Here is a 104-residue protein sequence, read N- to C-terminus: Large ribosomal subunit protein uL24 (104 aa).

The protein belongs to the universal ribosomal protein uL24 family. As to quaternary structure, part of the 50S ribosomal subunit.

In terms of biological role, one of two assembly initiator proteins, it binds directly to the 5'-end of the 23S rRNA, where it nucleates assembly of the 50S subunit. Its function is as follows. One of the proteins that surrounds the polypeptide exit tunnel on the outside of the subunit. This Rhodopseudomonas palustris (strain BisA53) protein is Large ribosomal subunit protein uL24.